Consider the following 153-residue polypeptide: Interleukin-4 (153 aa).

A signal peptide spans 1 to 24 (MGLTSQLLPPLFFLLACAGNFVHG). Disulfide bonds link C27–C151, C48–C89, and C70–C123. N62 carries N-linked (GlcNAc...) asparagine glycosylation.

The protein belongs to the IL-4/IL-13 family. As to quaternary structure, interacts with IL4R. Interacts with IL13RA1.

It is found in the secreted. Cytokine secreted primarily by mast cells, T-cells, eosinophils, and basophils that plays a role in regulating antibody production, hematopoiesis and inflammation, and the development of effector T-cell responses. Induces the expression of class II MHC molecules on resting B-cells. Enhances both secretion and cell surface expression of IgE and IgG1. Also regulates the expression of the low affinity Fc receptor for IgE (CD23) on both lymphocytes and monocytes. Positively regulates IL31RA expression in macrophages. Stimulates autophagy in dendritic cells by interfering with mTORC1 signaling and through the induction of RUFY4. In addition, plays a critical role in higher functions of the normal brain, such as memory and learning. Upon binding to IL4, IL4R receptor dimerizes either with the common IL2R gamma chain/IL2RG to produce the type 1 signaling complex, located mainly on hematopoietic cells, or with the IL13RA1 to produce the type 2 complex, which is also expressed on nonhematopoietic cells. Engagement of both types of receptors initiates JAK3 and to a lower extend JAK1 phosphorylation leading to activation of the signal transducer and activator of transcription 6/STAT6. This chain is Interleukin-4 (IL4), found in Homo sapiens (Human).